We begin with the raw amino-acid sequence, 203 residues long: Large ribosomal subunit protein bL25 (203 aa).

The protein belongs to the bacterial ribosomal protein bL25 family. CTC subfamily. In terms of assembly, part of the 50S ribosomal subunit; part of the 5S rRNA/L5/L18/L25 subcomplex. Contacts the 5S rRNA. Binds to the 5S rRNA independently of L5 and L18.

In terms of biological role, this is one of the proteins that binds to the 5S RNA in the ribosome where it forms part of the central protuberance. In Cupriavidus metallidurans (strain ATCC 43123 / DSM 2839 / NBRC 102507 / CH34) (Ralstonia metallidurans), this protein is Large ribosomal subunit protein bL25.